The sequence spans 413 residues: Transforming growth factor beta-2 proprotein (413 aa).

Positions M1–L19 are cleaved as a signal peptide. 3 N-linked (GlcNAc...) asparagine glycosylation sites follow: N72, N140, and N241. 4 cysteine pairs are disulfide-bonded: C308–C317, C316–C379, C345–C410, and C349–C412.

It belongs to the TGF-beta family. In terms of assembly, interacts with Transforming growth factor beta-2 (TGF-beta-2) chain; interaction is non-covalent and maintains (TGF-beta-2) in a latent state. Homodimer; disulfide-linked. Interacts with TGF-beta receptors (tgfbr1 and tgfbr2), leading to signal transduction. Post-translationally, the precursor proprotein is cleaved in the Golgi apparatus to form Transforming growth factor beta-2 (TGF-beta-2) and Latency-associated peptide (LAP) chains, which remain non-covalently linked, rendering TGF-beta-2 inactive.

It is found in the secreted. It localises to the extracellular space. The protein localises to the extracellular matrix. Functionally, precursor of the Latency-associated peptide (LAP) and Transforming growth factor beta-2 (TGF-beta-2) chains, which constitute the regulatory and active subunit of TGF-beta-2, respectively. Required to maintain the Transforming growth factor beta-2 (TGF-beta-2) chain in a latent state during storage in extracellular matrix. Associates non-covalently with TGF-beta-2 and regulates its activation via interaction with 'milieu molecules', such as ltbp1 and lrrc32/garp, that control activation of TGF-beta-2. In terms of biological role, multifunctional protein that regulates various processes such as angiogenesis and heart development. Activation into mature form follows different steps: following cleavage of the proprotein in the Golgi apparatus, Latency-associated peptide (LAP) and Transforming growth factor beta-2 (TGF-beta-2) chains remain non-covalently linked rendering TGF-beta-2 inactive during storage in extracellular matrix. At the same time, LAP chain interacts with 'milieu molecules', such as ltbp1 and lrrc32/garp, that control activation of TGF-beta-2 and maintain it in a latent state during storage in extracellular milieus. Once activated following release of LAP, TGF-beta-2 acts by binding to TGF-beta receptors (tgfbr1 and tgfbr2), which transduce signal. This Xenopus laevis (African clawed frog) protein is Transforming growth factor beta-2 proprotein (tgfb2).